The following is a 283-amino-acid chain: MTVQTSKNPQVDIAEDNAFFPSEYSLSQYTSPVSDLDGVDYPKPYRGKHKILVIAADERYLPTDNGKLFSTGNHPIETLLPLYHLHAAGFEFEVATISGLMTKFEYWAMPHKDEKVMPFFEQHKSLFRNPKKLADVVASLNADSEYAAIFVPGGHGTLIGLPESQDVAAALQWAIKNDRFVISLCHGPAAFLALRHGDNPLNGYSICAFPDAADKQTPEIGYMPGHLTWYFGEELKKMGMNIINDDITGRVHKDRKLLTGDSPFAANALGKLAAQEMLAAYAG.

Positions 86, 91, and 123 each coordinate Zn(2+). The active-site Nucleophile is Cys185.

Belongs to the peptidase C56 family. HchA subfamily. In terms of assembly, homodimer.

It is found in the cytoplasm. It carries out the reaction N(omega)-(1-hydroxy-2-oxopropyl)-L-arginyl-[protein] + H2O = lactate + L-arginyl-[protein] + H(+). It catalyses the reaction N(6)-(1-hydroxy-2-oxopropyl)-L-lysyl-[protein] + H2O = lactate + L-lysyl-[protein] + H(+). The enzyme catalyses S-(1-hydroxy-2-oxopropyl)-L-cysteinyl-[protein] + H2O = lactate + L-cysteinyl-[protein] + H(+). The catalysed reaction is N(omega)-(1-hydroxy-2-oxoethyl)-L-arginyl-[protein] + H2O = L-arginyl-[protein] + glycolate + H(+). It carries out the reaction N(6)-(1-hydroxy-2-oxoethyl)-L-lysyl-[protein] + H2O = glycolate + L-lysyl-[protein] + H(+). It catalyses the reaction S-(1-hydroxy-2-oxoethyl)-L-cysteinyl-[protein] + H2O = glycolate + L-cysteinyl-[protein] + H(+). The enzyme catalyses N(2)-(1-hydroxy-2-oxopropyl)-dGTP + H2O = lactate + dGTP + H(+). The catalysed reaction is N(2)-(1-hydroxy-2-oxopropyl)-GTP + H2O = lactate + GTP + H(+). It carries out the reaction N(2)-(1-hydroxy-2-oxopropyl)-GDP + H2O = lactate + GDP + H(+). It catalyses the reaction N(2)-(1-hydroxy-2-oxopropyl)-GMP + H2O = lactate + GMP + H(+). The enzyme catalyses N(2)-(1-hydroxy-2-oxoethyl)-dGTP + H2O = dGTP + glycolate + H(+). The catalysed reaction is N(2)-(1-hydroxy-2-oxoethyl)-GTP + H2O = glycolate + GTP + H(+). It carries out the reaction N(2)-(1-hydroxy-2-oxoethyl)-GDP + H2O = glycolate + GDP + H(+). It catalyses the reaction N(2)-(1-hydroxy-2-oxoethyl)-GMP + H2O = glycolate + GMP + H(+). The enzyme catalyses an N(2)-(1-hydroxy-2-oxopropyl)-guanosine in RNA + H2O = a guanosine in RNA + lactate + H(+). The catalysed reaction is an N(2)-(1-hydroxy-2-oxopropyl)-2'-deoxyguanosine in DNA + H2O = a 2'-deoxyguanosine in DNA + lactate + H(+). It carries out the reaction an N(2)-(1-hydroxy-2-oxoethyl)-guanosine in RNA + H2O = a guanosine in RNA + glycolate + H(+). It catalyses the reaction an N(2)-(1-hydroxy-2-oxoethyl)-2'-deoxyguanosine in DNA + H2O = a 2'-deoxyguanosine in DNA + glycolate + H(+). Functionally, protein and nucleotide deglycase that catalyzes the deglycation of the Maillard adducts formed between amino groups of proteins or nucleotides and reactive carbonyl groups of glyoxals. Thus, functions as a protein deglycase that repairs methylglyoxal- and glyoxal-glycated proteins, and releases repaired proteins and lactate or glycolate, respectively. Deglycates cysteine, arginine and lysine residues in proteins, and thus reactivates these proteins by reversing glycation by glyoxals. Acts on early glycation intermediates (hemithioacetals and aminocarbinols), preventing the formation of Schiff bases and advanced glycation endproducts (AGE). Also functions as a nucleotide deglycase able to repair glycated guanine in the free nucleotide pool (GTP, GDP, GMP, dGTP) and in DNA and RNA. Is thus involved in a major nucleotide repair system named guanine glycation repair (GG repair), dedicated to reversing methylglyoxal and glyoxal damage via nucleotide sanitization and direct nucleic acid repair. Plays an important role in protecting cells from carbonyl stress. The polypeptide is Protein/nucleic acid deglycase HchA (Escherichia coli (strain 55989 / EAEC)).